The sequence spans 205 residues: ATP phosphoribosyltransferase (205 aa).

Belongs to the ATP phosphoribosyltransferase family. Short subfamily. In terms of assembly, heteromultimer composed of HisG and HisZ subunits.

It localises to the cytoplasm. The catalysed reaction is 1-(5-phospho-beta-D-ribosyl)-ATP + diphosphate = 5-phospho-alpha-D-ribose 1-diphosphate + ATP. Its pathway is amino-acid biosynthesis; L-histidine biosynthesis; L-histidine from 5-phospho-alpha-D-ribose 1-diphosphate: step 1/9. Catalyzes the condensation of ATP and 5-phosphoribose 1-diphosphate to form N'-(5'-phosphoribosyl)-ATP (PR-ATP). Has a crucial role in the pathway because the rate of histidine biosynthesis seems to be controlled primarily by regulation of HisG enzymatic activity. The polypeptide is ATP phosphoribosyltransferase (Staphylococcus carnosus (strain TM300)).